Here is a 289-residue protein sequence, read N- to C-terminus: Elongation factor Ts (289 aa).

The tract at residues 80–83 is involved in Mg(2+) ion dislocation from EF-Tu; it reads TDFV.

Belongs to the EF-Ts family.

The protein resides in the cytoplasm. Its function is as follows. Associates with the EF-Tu.GDP complex and induces the exchange of GDP to GTP. It remains bound to the aminoacyl-tRNA.EF-Tu.GTP complex up to the GTP hydrolysis stage on the ribosome. This is Elongation factor Ts from Francisella tularensis subsp. holarctica (strain LVS).